Consider the following 644-residue polypeptide: Cell pattern formation-associated protein StuA (644 aa).

Residues 18-33 (ATAHAPASAAPSGISH) are compositionally biased toward low complexity. Disordered stretches follow at residues 18–58 (ATAH…PGYP) and 86–120 (QLPAMSSSGPSPSLSGAQSYAPHSFDHTGQVAPPG). Over residues 38–47 (PQSSMMQPGQ) the composition is skewed to polar residues. The span at 87-104 (LPAMSSSGPSPSLSGAQS) shows a compositional bias: low complexity. An HTH APSES-type domain is found at 124–230 (RVTATLWEDE…HDIGALLYHP (107 aa)). Positions 158–179 (GTKLLNVAGMTRGRRDGILKSE) form a DNA-binding region, H-T-H motif. The tract at residues 239-644 (GSAAMAAVDR…HTMTAQRARR (406 aa)) is disordered. The span at 253-269 (SMQTQRYISGPTTSQPP) shows a compositional bias: polar residues. Positions 315–328 (SASSIMGMSNSGSS) are enriched in low complexity. 3 stretches are compositionally biased toward polar residues: residues 334 to 357 (ANVQTPQGSQPLSIDTGLSNTRSV), 371 to 383 (QAISYGSNQSYDN), and 395 to 404 (PGQYNTQGQS). The segment covering 456–465 (EGDHEHDNEY) has biased composition (basic and acidic residues). Over residues 509 to 524 (GSGRATPRTTTTSQTQ) the composition is skewed to low complexity. Over residues 525–544 (WNSGYPTPQRQGPPSSNLYN) the composition is skewed to polar residues. The tract at residues 584 to 612 (KRGRDDDDEDPYRPDSVQSDDMGGLKRRK) is nuclear localization domain. Residues 635–644 (HTMTAQRARR) are compositionally biased toward polar residues.

Belongs to the EFG1/PHD1/stuA family.

The protein localises to the nucleus. In terms of biological role, transcription factor that regulates asexual reproduction. Binds the StuA-response elements (StRE) with the consensus sequence 5'-(A/T)CGCG(T/A)N(A/C)-3' at the promoters of target genes. Required for pathogenicity and positively regulates the synthesis of the mycotoxin alternariol. Acts as a positive regulator of Tox3 but is not required for the expression of ToxA. Also acts as a central regulator of carbon metabolism including glycolysis, the TCA cycle, and amino acid synthesis. The polypeptide is Cell pattern formation-associated protein StuA (Phaeosphaeria nodorum (strain SN15 / ATCC MYA-4574 / FGSC 10173) (Glume blotch fungus)).